A 128-amino-acid polypeptide reads, in one-letter code: Ribonuclease pancreatic (128 aa).

Over residues 1–15 the composition is skewed to basic and acidic residues; the sequence is SESSAKKFERQHMDS. The tract at residues 1–28 is disordered; sequence SESSAKKFERQHMDSRGSPSTNPNYCNE. Substrate contacts are provided by Lys-7 and Arg-10. Catalysis depends on His-12, which acts as the Proton acceptor. 4 disulfides stabilise this stretch: Cys-26/Cys-84, Cys-40/Cys-95, Cys-58/Cys-110, and Cys-65/Cys-72. N-linked (GlcNAc...) asparagine glycosylation occurs at Asn-34. Residues 41–45, Lys-66, and Arg-85 contribute to the substrate site; that span reads KPVNT. Residue His-119 is the Proton donor of the active site.

Belongs to the pancreatic ribonuclease family. As to quaternary structure, monomer. Interacts with and forms tight 1:1 complexes with RNH1. Dimerization of two such complexes may occur. Interaction with RNH1 inhibits this protein. As to expression, pancreas.

The protein resides in the secreted. The catalysed reaction is an [RNA] containing cytidine + H2O = an [RNA]-3'-cytidine-3'-phosphate + a 5'-hydroxy-ribonucleotide-3'-[RNA].. The enzyme catalyses an [RNA] containing uridine + H2O = an [RNA]-3'-uridine-3'-phosphate + a 5'-hydroxy-ribonucleotide-3'-[RNA].. In terms of biological role, endonuclease that catalyzes the cleavage of RNA on the 3' side of pyrimidine nucleotides. Acts on single-stranded and double-stranded RNA. In Myocastor coypus (Coypu), this protein is Ribonuclease pancreatic (RNASE1).